Here is a 476-residue protein sequence, read N- to C-terminus: Aspartyl/glutamyl-tRNA(Asn/Gln) amidotransferase subunit B (476 aa).

The protein belongs to the GatB/GatE family. GatB subfamily. As to quaternary structure, heterotrimer of A, B and C subunits.

The enzyme catalyses L-glutamyl-tRNA(Gln) + L-glutamine + ATP + H2O = L-glutaminyl-tRNA(Gln) + L-glutamate + ADP + phosphate + H(+). It catalyses the reaction L-aspartyl-tRNA(Asn) + L-glutamine + ATP + H2O = L-asparaginyl-tRNA(Asn) + L-glutamate + ADP + phosphate + 2 H(+). Allows the formation of correctly charged Asn-tRNA(Asn) or Gln-tRNA(Gln) through the transamidation of misacylated Asp-tRNA(Asn) or Glu-tRNA(Gln) in organisms which lack either or both of asparaginyl-tRNA or glutaminyl-tRNA synthetases. The reaction takes place in the presence of glutamine and ATP through an activated phospho-Asp-tRNA(Asn) or phospho-Glu-tRNA(Gln). In Enterococcus faecalis (strain ATCC 700802 / V583), this protein is Aspartyl/glutamyl-tRNA(Asn/Gln) amidotransferase subunit B.